The primary structure comprises 909 residues: Protein translocase subunit SecA (909 aa).

Residues Gln-87 and 105 to 109 (GEGKT) contribute to the ATP site. The tract at residues 246 to 265 (LEQQEKEDEEGKNGDGDYTI) is disordered. Residues 254 to 265 (EEGKNGDGDYTI) are compositionally biased toward basic and acidic residues. Asp-512 serves as a coordination point for ATP. The segment covering 834-858 (ESDVEAVEEQRRQADEQPKQYEHET) has biased composition (basic and acidic residues). Residues 834–899 (ESDVEAVEEQ…NDPCPCGSGL (66 aa)) form a disordered region. Residues 859-875 (ASATQAPEQAPEAAPAA) show a composition bias toward low complexity. Cys-893, Cys-895, Cys-904, and His-905 together coordinate Zn(2+).

Belongs to the SecA family. As to quaternary structure, monomer and homodimer. Part of the essential Sec protein translocation apparatus which comprises SecA, SecYEG and auxiliary proteins SecDF-YajC and YidC. Zn(2+) serves as cofactor.

The protein localises to the cell inner membrane. The protein resides in the cytoplasm. The catalysed reaction is ATP + H2O + cellular proteinSide 1 = ADP + phosphate + cellular proteinSide 2.. In terms of biological role, part of the Sec protein translocase complex. Interacts with the SecYEG preprotein conducting channel. Has a central role in coupling the hydrolysis of ATP to the transfer of proteins into and across the cell membrane, serving both as a receptor for the preprotein-SecB complex and as an ATP-driven molecular motor driving the stepwise translocation of polypeptide chains across the membrane. This is Protein translocase subunit SecA from Pseudoalteromonas atlantica (strain T6c / ATCC BAA-1087).